We begin with the raw amino-acid sequence, 498 residues long: Diacylglycerol O-acyltransferase 1A (498 aa).

A disordered region spans residues 1–67 (MAISDEPETV…ANSQPQQKQD (67 aa)). 7 consecutive transmembrane segments (helical) span residues 102–122 (HAGL…RLII), 146–166 (WPLF…FIVE), 178–198 (VVVV…VLVI), 203–223 (SAFL…LKLV), 253–273 (YPYN…TLCY), 295–315 (LIIF…PIVQ), and 342–362 (VWLC…AELL). The FYXDWWN motif signature appears at 369 to 375 (FYQDWWN). 3 helical membrane passes run 410–430 (AVAL…CIAV), 432–452 (CHIF…LVFI), and 465–485 (VGNM…CVLL). The active site involves H424.

It belongs to the membrane-bound acyltransferase family. Sterol o-acyltransferase subfamily. In terms of tissue distribution, highly expressed in flowers and pods. Expressed at low levels in roots, stems and leaves.

Its subcellular location is the endoplasmic reticulum membrane. The enzyme catalyses an acyl-CoA + a 1,2-diacyl-sn-glycerol = a triacyl-sn-glycerol + CoA. Its pathway is glycerolipid metabolism; triacylglycerol biosynthesis. Its function is as follows. Major contributor to triacylglycerol (TAG) synthesis and oil accumulation in developing seeds. Catalyzes the acylation of the sn-3 hydroxy group of sn-1,2-diacylglycerol using acyl-CoA. Has a marked preference for oleoyl-CoA (18:1) and sn-1,2-dioleoylglycerol over vernoloyl-CoA and sn-1,2-divernoloylglycerol. Can use oleoyl-CoA, linoleoyl-CoA and linolenoyl-CoA as substrates. The polypeptide is Diacylglycerol O-acyltransferase 1A (Glycine max (Soybean)).